The following is a 1012-amino-acid chain: Tolloid-like protein 2 (1012 aa).

An N-terminal signal peptide occupies residues 1-21 (MPLATTLGTLVLLLLLPLPRG). Residues 22–146 (AEVTGDHSNV…AKTFSARVRR (125 aa)) constitute a propeptide that is removed on maturation. A disordered region spans residues 83–135 (KPSIDKPGHDTGGLEETSARWPNDTASNASIQAPRKDGKDATTFLPNPGTSNT). Polar residues predominate over residues 126–135 (FLPNPGTSNT). Residues 146 to 346 (RATTSRTERI…AQARKLYKCP (201 aa)) form the Peptidase M12A domain. The N-linked (GlcNAc...) asparagine glycan is linked to N168. Disulfide bonds link C189–C345, C209–C231, C211–C212, and C348–C374. A Zn(2+)-binding site is contributed by H239. E240 is a catalytic residue. 2 residues coordinate Zn(2+): H243 and H249. 2 CUB domains span residues 348-460 (CGET…YEAM) and 461-573 (CGGD…FFKE). Residues N358 and N389 are each glycosylated (N-linked (GlcNAc...) asparagine). Cystine bridges form between C401–C423, C461–C487, C514–C536, C577–C589, C585–C598, C600–C613, C617–C643, C670–C692, C733–C744, C740–C753, C755–C768, and C773–C799. An EGF-like 1; calcium-binding domain is found at 573–614 (EVDECSWPDHGGCEQRCVNTLGSYTCACDPGYELAADKKTCE). In terms of domain architecture, CUB 3 spans 617 to 729 (CGGFITKLNG…RGFRAHFFSD (113 aa)). The N-linked (GlcNAc...) asparagine glycan is linked to N625. Positions 729–769 (DKDECAKDNGGCQQECVNTFGSYLCRCRNGYRLHENGHDCK) constitute an EGF-like 2; calcium-binding domain. 2 consecutive CUB domains span residues 773–885 (CAYK…HSTE) and 886–1002 (CGGR…YTST). N-linked (GlcNAc...) asparagine glycosylation is present at N802. Intrachain disulfides connect C826–C848, C886–C916, and C943–C965. 2 positions are modified to omega-N-methylarginine: R960 and R963.

The cofactor is Zn(2+).

It is found in the secreted. Functionally, protease which specifically processes pro-lysyl oxidase. Required for the embryonic development. Predominant protease, which in the development, influences dorsal-ventral patterning and skeletogenesis. The polypeptide is Tolloid-like protein 2 (Tll2) (Mus musculus (Mouse)).